The following is a 500-amino-acid chain: Histidine ammonia-lyase (500 aa).

Positions 142 to 144 (ASG) form a cross-link, 5-imidazolinone (Ala-Gly). A 2,3-didehydroalanine (Ser) modification is found at serine 143.

It belongs to the PAL/histidase family. In terms of processing, contains an active site 4-methylidene-imidazol-5-one (MIO), which is formed autocatalytically by cyclization and dehydration of residues Ala-Ser-Gly.

Its subcellular location is the cytoplasm. The enzyme catalyses L-histidine = trans-urocanate + NH4(+). The protein operates within amino-acid degradation; L-histidine degradation into L-glutamate; N-formimidoyl-L-glutamate from L-histidine: step 1/3. The sequence is that of Histidine ammonia-lyase from Macrococcus caseolyticus (strain JCSC5402) (Macrococcoides caseolyticum).